Reading from the N-terminus, the 423-residue chain is Histidine--tRNA ligase (423 aa).

The protein belongs to the class-II aminoacyl-tRNA synthetase family. As to quaternary structure, homodimer.

The protein resides in the cytoplasm. The enzyme catalyses tRNA(His) + L-histidine + ATP = L-histidyl-tRNA(His) + AMP + diphosphate + H(+). In Prochlorococcus marinus (strain NATL1A), this protein is Histidine--tRNA ligase.